Consider the following 575-residue polypeptide: Transport inhibitor response 1-like protein Os04g0395600 (575 aa).

The F-box domain occupies 1-45; the sequence is MTYFPEEVVEHIFSFLPAQRDRNTVSLVCKVWYEIERLSRRGVFV. K69 contributes to the 1D-myo-inositol hexakisphosphate binding site. Residues 76–77 form an interaction with auxin-responsive proteins region; it reads DF. Residues 108 to 109 and R340 each bind 1D-myo-inositol hexakisphosphate; that span reads KR. Positions 343–348 are interaction with auxin-responsive proteins; that stretch reads PSDFYV. A 1D-myo-inositol hexakisphosphate-binding site is contributed by 396 to 398; the sequence is RFR. Residues 400–404 form an interaction with auxin-responsive proteins region; sequence CILEP. Residue R431 coordinates 1D-myo-inositol hexakisphosphate. The interval 459–460 is interaction with auxin-responsive proteins; that stretch reads AF. 1D-myo-inositol hexakisphosphate contacts are provided by residues 479–480 and R504; that span reads RK.

In terms of assembly, part of a SCF (SKP1-cullin-F-box) protein ligase complex. May interact with auxin and auxin-responsive proteins.

Its subcellular location is the nucleus. The protein operates within protein modification; protein ubiquitination. The protein is Transport inhibitor response 1-like protein Os04g0395600 of Oryza sativa subsp. japonica (Rice).